The chain runs to 637 residues: Biosynthetic arginine decarboxylase (637 aa).

Lys-101 is modified (N6-(pyridoxal phosphate)lysine). 286–296 (FDVGGGLAVDY) lines the substrate pocket.

This sequence belongs to the Orn/Lys/Arg decarboxylase class-II family. SpeA subfamily. The cofactor is Mg(2+). It depends on pyridoxal 5'-phosphate as a cofactor.

The catalysed reaction is L-arginine + H(+) = agmatine + CO2. It functions in the pathway amine and polyamine biosynthesis; agmatine biosynthesis; agmatine from L-arginine: step 1/1. Functionally, catalyzes the biosynthesis of agmatine from arginine. This chain is Biosynthetic arginine decarboxylase, found in Shewanella loihica (strain ATCC BAA-1088 / PV-4).